The chain runs to 153 residues: Large ribosomal subunit protein uL15 (153 aa).

Over residues 1–40 the composition is skewed to basic residues; the sequence is MTDKKRRQRGSRTHGGGTHKNRRGAGNRGGRGRAGRKKHE. A disordered region spans residues 1 to 60; it reads MTDKKRRQRGSRTHGGGTHKNRRGAGNRGGRGRAGRKKHEQHNYEDVGKSGFKRPEKTDR. Residues 41–60 are compositionally biased toward basic and acidic residues; that stretch reads QHNYEDVGKSGFKRPEKTDR.

Belongs to the universal ribosomal protein uL15 family. In terms of assembly, part of the 50S ribosomal subunit.

Functionally, binds to the 23S rRNA. The sequence is that of Large ribosomal subunit protein uL15 from Halobacterium salinarum (strain ATCC 29341 / DSM 671 / R1).